Consider the following 514-residue polypeptide: 2,3-bisphosphoglycerate-independent phosphoglycerate mutase (514 aa).

2 residues coordinate Mn(2+): Asp-13 and Ser-69. Catalysis depends on Ser-69, which acts as the Phosphoserine intermediate. Substrate contacts are provided by residues His-128, 158–159, Arg-189, Arg-195, 263–266, and Lys-336; these read RD and RADR. Asp-402, His-406, Asp-443, His-444, and His-461 together coordinate Mn(2+).

It belongs to the BPG-independent phosphoglycerate mutase family. Monomer. Mn(2+) serves as cofactor.

It catalyses the reaction (2R)-2-phosphoglycerate = (2R)-3-phosphoglycerate. The protein operates within carbohydrate degradation; glycolysis; pyruvate from D-glyceraldehyde 3-phosphate: step 3/5. Its function is as follows. Catalyzes the interconversion of 2-phosphoglycerate and 3-phosphoglycerate. The protein is 2,3-bisphosphoglycerate-independent phosphoglycerate mutase of Akkermansia muciniphila (strain ATCC BAA-835 / DSM 22959 / JCM 33894 / BCRC 81048 / CCUG 64013 / CIP 107961 / Muc).